Here is a 77-residue protein sequence, read N- to C-terminus: Thioredoxin (77 aa).

Catalysis depends on nucleophile residues Cys11 and Cys14. Cys11 and Cys14 are joined by a disulfide.

Belongs to the glutaredoxin family.

Its function is as follows. Does not function as a glutathione-disulfide oxidoreductase in the presence of glutathione and glutathione reductase. Has low thioredoxin activity in vitro. The chain is Thioredoxin from Methanothermobacter thermautotrophicus (strain ATCC 29096 / DSM 1053 / JCM 10044 / NBRC 100330 / Delta H) (Methanobacterium thermoautotrophicum).